A 259-amino-acid polypeptide reads, in one-letter code: Expansin-B4 (259 aa).

The signal sequence occupies residues 1 to 23 (MASSQRYFALLALFAVSLKFCYC). An N-linked (GlcNAc...) asparagine glycan is attached at asparagine 25. Residues 51–161 (GGACGYGSAV…KRAACLYRGT (111 aa)) form the Expansin-like EG45 domain. Intrachain disulfides connect cysteine 54–cysteine 83, cysteine 86–cysteine 156, and cysteine 91–cysteine 97. Residues 174–255 (YYISFVVEYE…NWKPDESYRS (82 aa)) enclose the Expansin-like CBD domain.

The protein belongs to the expansin family. Expansin B subfamily.

The protein localises to the secreted. Its subcellular location is the cell wall. The protein resides in the membrane. In terms of biological role, may cause loosening and extension of plant cell walls by disrupting non-covalent bonding between cellulose microfibrils and matrix glucans. No enzymatic activity has been found. The protein is Expansin-B4 (EXPB4) of Arabidopsis thaliana (Mouse-ear cress).